The primary structure comprises 205 residues: UPF0548 protein At2g17695 (205 aa).

The protein belongs to the UPF0548 family.

In Arabidopsis thaliana (Mouse-ear cress), this protein is UPF0548 protein At2g17695.